The primary structure comprises 138 residues: Probable non-specific lipid-transfer protein 1 (138 aa).

Positions 1–36 (MRTVSARSSVALVVIVAAVLVWTSSASVAPAPAPGS) are cleaved as a signal peptide. Disulfide bonds link Cys-40-Cys-88, Cys-50-Cys-65, Cys-66-Cys-111, and Cys-86-Cys-127.

The protein belongs to the plant LTP family.

In terms of biological role, plant non-specific lipid-transfer proteins transfer phospholipids as well as galactolipids across membranes. May play a role in wax or cutin deposition in the cell walls of expanding epidermal cells and certain secretory tissues. This Parietaria judaica (Pellitory-of-the-wall) protein is Probable non-specific lipid-transfer protein 1.